Consider the following 144-residue polypeptide: Large ribosomal subunit protein uL15 (144 aa).

The interval 1–51 (MRLNTIKPGAGSKSAGKRVGRGIGSGLGKTCGRGHKGQKSRAGGFHKVGFE) is disordered. The span at 21–31 (RGIGSGLGKTC) shows a compositional bias: gly residues.

It belongs to the universal ribosomal protein uL15 family. Part of the 50S ribosomal subunit.

Binds to the 23S rRNA. In Azoarcus sp. (strain BH72), this protein is Large ribosomal subunit protein uL15.